The sequence spans 348 residues: DnaJ homolog subfamily B member 5 (348 aa).

Residues 4–68 (DYYKILGIPS…KKRGLYDQYG (65 aa)) form the J domain.

The chain is DnaJ homolog subfamily B member 5 (DNAJB5) from Homo sapiens (Human).